We begin with the raw amino-acid sequence, 180 residues long: Ribosome-recycling factor (180 aa).

This sequence belongs to the RRF family.

It is found in the cytoplasm. Its function is as follows. Responsible for the release of ribosomes from messenger RNA at the termination of protein biosynthesis. May increase the efficiency of translation by recycling ribosomes from one round of translation to another. This Chlamydia caviae (strain ATCC VR-813 / DSM 19441 / 03DC25 / GPIC) (Chlamydophila caviae) protein is Ribosome-recycling factor.